The primary structure comprises 211 residues: Ribonuclease HII (211 aa).

In terms of domain architecture, RNase H type-2 spans 11–200 (EFIAGVDEVG…VKKLLSTLLS (190 aa)). A divalent metal cation-binding residues include D17, E18, and D109.

This sequence belongs to the RNase HII family. It depends on Mn(2+) as a cofactor. Requires Mg(2+) as cofactor.

The protein resides in the cytoplasm. It carries out the reaction Endonucleolytic cleavage to 5'-phosphomonoester.. Its function is as follows. Endonuclease that specifically degrades the RNA of RNA-DNA hybrids. The polypeptide is Ribonuclease HII (Histophilus somni (strain 2336) (Haemophilus somnus)).